The primary structure comprises 426 residues: D-tagatose-1,6-bisphosphate aldolase subunit KbaZ (426 aa).

This sequence belongs to the GatZ/KbaZ family. KbaZ subfamily. As to quaternary structure, forms a complex with KbaY.

It functions in the pathway carbohydrate metabolism; D-tagatose 6-phosphate degradation; D-glyceraldehyde 3-phosphate and glycerone phosphate from D-tagatose 6-phosphate: step 2/2. Component of the tagatose-1,6-bisphosphate aldolase KbaYZ that is required for full activity and stability of the Y subunit. Could have a chaperone-like function for the proper and stable folding of KbaY. When expressed alone, KbaZ does not show any aldolase activity. The polypeptide is D-tagatose-1,6-bisphosphate aldolase subunit KbaZ (Escherichia coli O8 (strain IAI1)).